The primary structure comprises 394 residues: Ornithine aminotransferase 1 (394 aa).

An N6-(pyridoxal phosphate)lysine modification is found at Lys-252.

It belongs to the class-III pyridoxal-phosphate-dependent aminotransferase family. OAT subfamily. Pyridoxal 5'-phosphate serves as cofactor.

It is found in the cytoplasm. The catalysed reaction is a 2-oxocarboxylate + L-ornithine = L-glutamate 5-semialdehyde + an L-alpha-amino acid. Its pathway is amino-acid biosynthesis; L-proline biosynthesis; L-glutamate 5-semialdehyde from L-ornithine: step 1/1. Functionally, catalyzes the interconversion of ornithine to glutamate semialdehyde. The protein is Ornithine aminotransferase 1 of Staphylococcus aureus (strain MRSA252).